The primary structure comprises 216 residues: Acyl-homoserine-lactone synthase (216 aa).

The protein belongs to the autoinducer synthase family.

The catalysed reaction is a fatty acyl-[ACP] + S-adenosyl-L-methionine = an N-acyl-L-homoserine lactone + S-methyl-5'-thioadenosine + holo-[ACP] + H(+). Required for the synthesis of OHHL (N-(3-oxohexanoyl)-L-homoserine lactone), an autoinducer molecule which binds to a yet uncharacterized transcriptional regulator. This is Acyl-homoserine-lactone synthase (eagI) from Enterobacter agglomerans (Erwinia herbicola).